The primary structure comprises 769 residues: Serine protease HtrA-like (769 aa).

The segment covering 1–20 (MDIGKKHVIPKSQYRRKRRE) has biased composition (basic residues). Positions 1–390 (MDIGKKHVIP…ATSKLNKGRA (390 aa)) are disordered. 2 stretches are compositionally biased toward basic and acidic residues: residues 21 to 64 (FFHN…ERFK) and 71 to 108 (LEQR…DVSK). Residues 126–137 (YEQNSEATLSTK) are compositionally biased toward polar residues. Over residues 138–186 (STDKVESTEMRKLSSDKNKVGHEEQHVLSKPSEHDKETRIDSESSRTDS) the composition is skewed to basic and acidic residues. Positions 247–262 (QQSQNEQTKTYTYGDS) are enriched in polar residues. 2 stretches are compositionally biased toward basic and acidic residues: residues 264-296 (QNDK…HIVD) and 310-330 (KTDD…HKQN). Positions 331–347 (ADSSETVGYQSQSTASH) are enriched in polar residues. A compositionally biased stretch (basic and acidic residues) spans 348 to 364 (RSTEKRNISINDHDKLN). Over residues 365 to 390 (GQKTNTKTSANNNQKKATSKLNKGRA) the composition is skewed to polar residues. Residues 410–430 (LVILMGIIILIVILNAIFNNV) traverse the membrane as a helical segment. Residues His-504, Asp-534, and Ser-619 each act as charge relay system in the active site. The 54-residue stretch at 680–733 (IVSLNSFERQAVKLPGKVKNGVVVDQVDNNGLADQSGLKKGDVITELDGKLLED) folds into the PDZ domain.

It belongs to the peptidase S1C family.

The protein resides in the cell membrane. This Staphylococcus aureus (strain NCTC 8325 / PS 47) protein is Serine protease HtrA-like.